A 234-amino-acid polypeptide reads, in one-letter code: 7-cyano-7-deazaguanine synthase (234 aa).

Residue 7–17 (LSGGLDSAVCM) participates in ATP binding. Positions 197, 208, 211, and 214 each coordinate Zn(2+).

The protein belongs to the QueC family. It depends on Zn(2+) as a cofactor.

It catalyses the reaction 7-carboxy-7-deazaguanine + NH4(+) + ATP = 7-cyano-7-deazaguanine + ADP + phosphate + H2O + H(+). It participates in purine metabolism; 7-cyano-7-deazaguanine biosynthesis. Catalyzes the ATP-dependent conversion of 7-carboxy-7-deazaguanine (CDG) to 7-cyano-7-deazaguanine (preQ(0)). The protein is 7-cyano-7-deazaguanine synthase of Methanococcus aeolicus (strain ATCC BAA-1280 / DSM 17508 / OCM 812 / Nankai-3).